A 352-amino-acid chain; its full sequence is Inorganic triphosphatase (352 aa).

One can recognise a CYTH domain in the interval 6–203 (LQEIELKLAI…KRGYLLGSKQ (198 aa)).

The catalysed reaction is triphosphate + H2O = phosphate + diphosphate. In terms of biological role, involved in the hydrolysis of the beta-gamma-phosphoanhydride linkage of triphosphate-containing substrates (inorganic or nucleoside-linked). Catalyzes the hydrolysis of inorganic triphosphate (PPPi), which could be cytotoxic because of its high affinity for calcium ion, thereby interfering with calcium signaling. This chain is Inorganic triphosphatase, found in Haemophilus influenzae (strain ATCC 51907 / DSM 11121 / KW20 / Rd).